The primary structure comprises 1058 residues: Outer capsid protein VP4 (1058 aa).

It belongs to the orthoreovirus lambda-2 protein family.

Its subcellular location is the virion. The enzyme catalyses a 5'-end diphospho-ribonucleoside in mRNA + GTP + H(+) = a 5'-end (5'-triphosphoguanosine)-ribonucleoside in mRNA + diphosphate. It carries out the reaction a 5'-end (5'-triphosphoguanosine)-ribonucleoside in mRNA + S-adenosyl-L-methionine = a 5'-end (N(7)-methyl 5'-triphosphoguanosine)-ribonucleoside in mRNA + S-adenosyl-L-homocysteine. Functionally, outer capsid protein involved in mRNA capping. Catalyzes the last 3 enzymatic activities for formation of the 5' cap structure on the viral plus-strand transcripts, namely the RNA guanylyltransferase, RNA-7N- and RNA-2'O-methyltransferase activities. This chain is Outer capsid protein VP4 (S4), found in Lymantria dispar cypovirus 1 (isolate Rao) (LdCPV-1).